A 305-amino-acid chain; its full sequence is Acetyl-coenzyme A carboxylase carboxyl transferase subunit beta (305 aa).

In terms of domain architecture, CoA carboxyltransferase N-terminal spans L29–S298. Zn(2+) is bound by residues C33, C36, C52, and C55. The C4-type zinc-finger motif lies at C33–C55.

This sequence belongs to the AccD/PCCB family. As to quaternary structure, acetyl-CoA carboxylase is a heterohexamer composed of biotin carboxyl carrier protein (AccB), biotin carboxylase (AccC) and two subunits each of ACCase subunit alpha (AccA) and ACCase subunit beta (AccD). The cofactor is Zn(2+).

Its subcellular location is the cytoplasm. It catalyses the reaction N(6)-carboxybiotinyl-L-lysyl-[protein] + acetyl-CoA = N(6)-biotinyl-L-lysyl-[protein] + malonyl-CoA. Its pathway is lipid metabolism; malonyl-CoA biosynthesis; malonyl-CoA from acetyl-CoA: step 1/1. Functionally, component of the acetyl coenzyme A carboxylase (ACC) complex. Biotin carboxylase (BC) catalyzes the carboxylation of biotin on its carrier protein (BCCP) and then the CO(2) group is transferred by the transcarboxylase to acetyl-CoA to form malonyl-CoA. This Synechococcus sp. (strain ATCC 27144 / PCC 6301 / SAUG 1402/1) (Anacystis nidulans) protein is Acetyl-coenzyme A carboxylase carboxyl transferase subunit beta.